A 498-amino-acid chain; its full sequence is MSELHLLSTQQLITGLQDKQFSSLELTDHYIKRINALDSKINSFITHTSETARAQAKAADEMRVQGDKRPLLGVPMAHKDIFCTQGVLTTCGSKMLHNFISPYDATIVTNIDKAGMISLGKLNMDEFAMGSDNESSYYGAVHNPWNIAHVPGGSSGGSAAAVAAGFVPVATGSDTGGSIRQPASFCGLTGIKPTYGRVSRFGMIAYASSLDQAGSMGRSAMDCAFLLQPMIGHDPRDATSIKYDMPDYVQDLNDAAASAGDKPFAGLRIGVAKEYFSKGLDTEVEQAARAALKKYEELGATIVEVTITDPEITLATYYMLAPAEASSNLSRFDGVRFGYRCENPKDLIDLYTRSRSEGFGPEVQRRILSGTYALSAGYFDAYYTKAQKVRRIIIKDFEDAFANCDVIASPTAPTAAYKLGEDLDPATMYLGDVYTIGVNLAGLPALSQPVGLTSAGLPIGLQLIGQYWQESKLLSTAHLFQQHTDHHLQHSTIAKETV.

Catalysis depends on charge relay system residues lysine 79 and serine 154. Serine 178 (acyl-ester intermediate) is an active-site residue.

It belongs to the amidase family. GatA subfamily. Heterotrimer of A, B and C subunits.

The catalysed reaction is L-glutamyl-tRNA(Gln) + L-glutamine + ATP + H2O = L-glutaminyl-tRNA(Gln) + L-glutamate + ADP + phosphate + H(+). Allows the formation of correctly charged Gln-tRNA(Gln) through the transamidation of misacylated Glu-tRNA(Gln) in organisms which lack glutaminyl-tRNA synthetase. The reaction takes place in the presence of glutamine and ATP through an activated gamma-phospho-Glu-tRNA(Gln). This is Glutamyl-tRNA(Gln) amidotransferase subunit A from Psychrobacter cryohalolentis (strain ATCC BAA-1226 / DSM 17306 / VKM B-2378 / K5).